The chain runs to 261 residues: ATP synthase subunit a (261 aa).

Helical transmembrane passes span 45-65, 107-127, 133-153, 162-182, 209-229, and 232-252; these read ITNVTMWMAIAVLVIAAILVL, VMTLFLFVLCGNVLGLLPLSF, MAVTVPLALMVFVGVTALGFM, MFWVTSAPLAIRPVLAVIEVI, IAGFASIAVVSPVVVGAVTAI, and LELLVAVVQAYVFTILTCVYL.

This sequence belongs to the ATPase A chain family. As to quaternary structure, F-type ATPases have 2 components, CF(1) - the catalytic core - and CF(0) - the membrane proton channel. CF(1) has five subunits: alpha(3), beta(3), gamma(1), delta(1), epsilon(1). CF(0) has four main subunits: a, b, b' and c.

The protein resides in the cell inner membrane. In terms of biological role, key component of the proton channel; it plays a direct role in the translocation of protons across the membrane. The polypeptide is ATP synthase subunit a (Cereibacter sphaeroides (strain ATCC 17025 / ATH 2.4.3) (Rhodobacter sphaeroides)).